The primary structure comprises 229 residues: Transcriptional activator protein IrlR (229 aa).

Positions 2 to 115 constitute a Response regulatory domain; sequence RILIVEDEPK…ELVARVRSIL (114 aa). A 4-aspartylphosphate modification is found at D51. A DNA-binding region (ompR/PhoB-type) is located at residues 123 to 221; the sequence is STVLRIADLE…VRGMGYVLEV (99 aa).

Post-translationally, phosphorylated by IrlS.

In terms of biological role, member of the two-component regulatory system IrlR/IrlS. May be involved in invasion of eukaryotic cells and heavy-metal resistance. The sequence is that of Transcriptional activator protein IrlR (irlR) from Burkholderia pseudomallei (strain 1026b).